We begin with the raw amino-acid sequence, 145 residues long: Large ribosomal subunit protein uL13 (145 aa).

The protein belongs to the universal ribosomal protein uL13 family. Part of the 50S ribosomal subunit.

This protein is one of the early assembly proteins of the 50S ribosomal subunit, although it is not seen to bind rRNA by itself. It is important during the early stages of 50S assembly. In Haloquadratum walsbyi (strain DSM 16790 / HBSQ001), this protein is Large ribosomal subunit protein uL13.